The chain runs to 217 residues: Large ribosomal subunit protein uL1 (217 aa).

Ser2 carries the N-acetylserine modification. Tyr11 bears the Phosphotyrosine mark. N6-acetyllysine is present on residues Lys91 and Lys106. Lys118 carries the post-translational modification N6-acetyllysine; alternate. Lys118 participates in a covalent cross-link: Glycyl lysine isopeptide (Lys-Gly) (interchain with G-Cter in SUMO1); alternate. Residue Lys118 forms a Glycyl lysine isopeptide (Lys-Gly) (interchain with G-Cter in SUMO2); alternate linkage. Residue Lys161 forms a Glycyl lysine isopeptide (Lys-Gly) (interchain with G-Cter in SUMO2) linkage.

This sequence belongs to the universal ribosomal protein uL1 family. As to quaternary structure, component of the large ribosomal subunit.

The protein localises to the cytoplasm. Component of the large ribosomal subunit. The ribosome is a large ribonucleoprotein complex responsible for the synthesis of proteins in the cell. This Bos taurus (Bovine) protein is Large ribosomal subunit protein uL1 (RPL10A).